The sequence spans 50 residues: Temporin-SHc (50 aa).

An N-terminal signal peptide occupies residues 1–10 (FLGTINLSLC). Positions 11-35 (EQERDADEEERRDEPDGSNVEVEKR) are excised as a propeptide. Phe-48 is subject to Phenylalanine amide.

In terms of tissue distribution, expressed by the skin glands.

Its subcellular location is the secreted. It is found in the target cell membrane. Amphipathic alpha-helical antimicrobial peptide with potent activity against some Gram-positive bacteria (MIC=4-&gt;80 uM), potent activity against fungi (MIC=10-20 uM), and no activity against Gram-negative bacteria. Does not display anti-leishmania activity. Does not show hemolytic activity (LC(50)&gt;80 uM). The chain is Temporin-SHc from Pelophylax saharicus (Sahara frog).